Reading from the N-terminus, the 389-residue chain is PqqA peptide cyclase (389 aa).

In terms of domain architecture, Radical SAM core spans 19–234 (VGLPLWLLAE…TNEYRDQLAA (216 aa)). [4Fe-4S] cluster contacts are provided by Cys33, Cys37, and Cys40.

Belongs to the radical SAM superfamily. PqqE family. Interacts with PqqD. The interaction is necessary for activity of PqqE. The cofactor is [4Fe-4S] cluster.

It catalyses the reaction [PQQ precursor protein] + S-adenosyl-L-methionine = E-Y cross-linked-[PQQ precursor protein] + 5'-deoxyadenosine + L-methionine + H(+). It participates in cofactor biosynthesis; pyrroloquinoline quinone biosynthesis. Catalyzes the cross-linking of a glutamate residue and a tyrosine residue in the PqqA protein as part of the biosynthesis of pyrroloquinoline quinone (PQQ). This chain is PqqA peptide cyclase, found in Pseudomonas syringae pv. tomato (strain ATCC BAA-871 / DC3000).